Consider the following 429-residue polypeptide: Adenylosuccinate synthetase (429 aa).

Residues 15–21 and 43–45 contribute to the GTP site; these read GDEGKGK and GHV. Catalysis depends on aspartate 16, which acts as the Proton acceptor. The Mg(2+) site is built by aspartate 16 and glycine 43. Residues 16–19, 41–44, threonine 131, arginine 145, glutamine 225, threonine 240, and arginine 304 contribute to the IMP site; these read DEGK and NAGH. The active-site Proton donor is the histidine 44. 300–306 contributes to the substrate binding site; the sequence is SNTKRPR. GTP-binding positions include arginine 306, 332 to 334, and 414 to 416; these read LLD and SVG.

This sequence belongs to the adenylosuccinate synthetase family. In terms of assembly, homodimer. The cofactor is Mg(2+).

The protein resides in the cytoplasm. The enzyme catalyses IMP + L-aspartate + GTP = N(6)-(1,2-dicarboxyethyl)-AMP + GDP + phosphate + 2 H(+). It functions in the pathway purine metabolism; AMP biosynthesis via de novo pathway; AMP from IMP: step 1/2. In terms of biological role, plays an important role in the de novo pathway of purine nucleotide biosynthesis. Catalyzes the first committed step in the biosynthesis of AMP from IMP. This is Adenylosuccinate synthetase from Mesoplasma florum (strain ATCC 33453 / NBRC 100688 / NCTC 11704 / L1) (Acholeplasma florum).